The following is a 406-amino-acid chain: Probable 2,3-bisphosphoglycerate-independent phosphoglycerate mutase (406 aa).

The protein belongs to the BPG-independent phosphoglycerate mutase family. A-PGAM subfamily.

It carries out the reaction (2R)-2-phosphoglycerate = (2R)-3-phosphoglycerate. Its pathway is carbohydrate degradation; glycolysis; pyruvate from D-glyceraldehyde 3-phosphate: step 3/5. Functionally, catalyzes the interconversion of 2-phosphoglycerate and 3-phosphoglycerate. In Thermus thermophilus (strain ATCC BAA-163 / DSM 7039 / HB27), this protein is Probable 2,3-bisphosphoglycerate-independent phosphoglycerate mutase.